The chain runs to 216 residues: Probable inactive E3 ubiquitin-protein ligase SINAT6 (216 aa).

The segment at 5-74 (INDLQVESRV…LLLHLRNDHN (70 aa)) adopts an SIAH-type zinc-finger fold.

It belongs to the SINA (Seven in absentia) family. In terms of assembly, homodimer. Interacts with SINAT1, SINAT2, SINAT3, SINAT4 and SINAT5. Interacts with ATG6 and TRAF1A. In terms of tissue distribution, expressed in roots, rosette leaves, cauline leaves, guard cells and flowers.

Its subcellular location is the cytoplasm. It localises to the nucleus. Probable inactive E3 ubiquitin-protein ligase that plays a role in regulation of autophagy. Upon starvation, involved in maintaining ATG6 homeostasis by competitively associating with ATG6, a component of the autophagosome complex. Acts as a positive regulator of drought stress response. Functions as a positive regulator of abscisic acid-mediated stomatal closure. In Arabidopsis thaliana (Mouse-ear cress), this protein is Probable inactive E3 ubiquitin-protein ligase SINAT6.